A 482-amino-acid polypeptide reads, in one-letter code: Probable metalloreductase AIM14 (482 aa).

The next 7 membrane-spanning stretches (helical) occupy residues 16-36 (VKYG…VATV), 50-70 (SLPW…LGVW), 87-106 (GRMA…KYWP), 123-143 (IIVV…FVEG), 155-175 (LLGV…VALF), 182-202 (LFYV…LFHA), and 205-225 (PVTL…FIKF). Residues 86–198 (FGRMAYCLLP…ITIGMFVVLI (113 aa)) enclose the Ferric oxidoreductase domain. The FAD-binding FR-type domain occupies 225–348 (FQTYSATPVS…GGSGISLAIP (124 aa)).

Belongs to the ferric reductase (FRE) family. AIM14 subfamily.

It localises to the membrane. In terms of biological role, probable cell surface metalloreductase. May be involved in iron or copper homeostasis. The protein is Probable metalloreductase AIM14 (AIM14) of Meyerozyma guilliermondii (strain ATCC 6260 / CBS 566 / DSM 6381 / JCM 1539 / NBRC 10279 / NRRL Y-324) (Yeast).